A 335-amino-acid chain; its full sequence is MNLAKRILQGEQLTKETVLKIYEDTNIDTLDLLNEAYILRKHYFGKKVKLNMILNAKSGICPENCGYCGQSREIKQKQRYALIPEEQIIDGAKVAHDNHIGTYCIVMSGRGPSDKEVDHISNTVRTIKSQHPQLKICACLGLTNDEQAKKLKSAGVDRYNHNINTSENYHDNVVTTHSYKDRTDTIELMKANNISPCSGVICGMGESNQDIVDMAFALKEMDADSIPINFLHPIKGTKFGSMDDLTPMKCLRIVALFRLINPTKEIRIAGGREVNLRSLQPLALKAANSIFVGDYLITGGQPNQLDYDMINDLGFEIDYDTCENKENKNDVSRAN.

Residues 43 to 269 (YFGKKVKLNM…INPTKEIRIA (227 aa)) form the Radical SAM core domain. Positions 61, 65, and 68 each coordinate [4Fe-4S] cluster. Residues Cys-104, Cys-137, Cys-197, and Arg-267 each coordinate [2Fe-2S] cluster.

The protein belongs to the radical SAM superfamily. Biotin synthase family. As to quaternary structure, homodimer. It depends on [4Fe-4S] cluster as a cofactor. Requires [2Fe-2S] cluster as cofactor.

It catalyses the reaction (4R,5S)-dethiobiotin + (sulfur carrier)-SH + 2 reduced [2Fe-2S]-[ferredoxin] + 2 S-adenosyl-L-methionine = (sulfur carrier)-H + biotin + 2 5'-deoxyadenosine + 2 L-methionine + 2 oxidized [2Fe-2S]-[ferredoxin]. The protein operates within cofactor biosynthesis; biotin biosynthesis; biotin from 7,8-diaminononanoate: step 2/2. Functionally, catalyzes the conversion of dethiobiotin (DTB) to biotin by the insertion of a sulfur atom into dethiobiotin via a radical-based mechanism. The chain is Biotin synthase from Staphylococcus aureus (strain MRSA252).